The following is a 616-amino-acid chain: D-glucuronyl C5-epimerase (616 aa).

At 1 to 12 the chain is on the cytoplasmic side; the sequence is MKCLRWRSNRHR. A helical; Signal-anchor for type II membrane protein transmembrane segment spans residues 13–29; that stretch reads IYLLVACGALFLLNRHL. Over 30-616 the chain is Extracellular; that stretch reads TQEESRIDEE…YAYGKRAKHN (587 aa). Residues Y136, 141–143, and Q169 each bind substrate; that span reads RDR. 4 N-linked (GlcNAc...) asparagine glycosylation sites follow: N188, N232, N267, and N471. Substrate contacts are provided by residues Y504, R562, and 574-580; that span reads RWDYHAV.

This sequence belongs to the D-glucuronyl C5-epimerase family. As to quaternary structure, homodimer. As to expression, expression in comma stage embryos is strong in the hypodermis and intestine and weaker in the head region. In late embryos, larval, and adult stages, expressed primarily in hypodermis and intestine.

The protein resides in the cell membrane. The protein localises to the secreted. It localises to the extracellular space. Its subcellular location is the extracellular matrix. It is found in the basement membrane. The enzyme catalyses [heparosan-N-sulfate](n) = [heparan-N-sulfate](n). The protein operates within glycan metabolism; heparan sulfate biosynthesis. Its pathway is glycan metabolism; heparin biosynthesis. Functionally, converts D-glucuronic acid residues adjacent to N-sulfate sugar residues to L-iduronic acids. Plays a role in the early migration of AQR and PQR neurons, which descend from the Q neuroblasts. The protein is D-glucuronyl C5-epimerase (hse-5) of Caenorhabditis elegans.